The sequence spans 226 residues: MEGCVSNLMVCNLAYSGKLEELKESILADKSLATRTDQDSRTALHWACSAGHTEIVEFLLQLGVPVNDKDDAGWSPLHIAASAGRDEIVKALLGKGAQVNAVNQNGCTPLHYAASKNRHEIAVMLLEGGANPDAKDHYEATAMHRAAAKGNLKMIHILLYYKASTNIQDTEGNTPLHLACDEERVEEAKLLVSQGASIYIENKEEKTPLQVAKGGLGLILKRMVEG.

Positions Met1–Asp37 are required for nuclear localization. The interval Met1–Asp71 is interaction with RB1. ANK repeat units lie at residues Gly3–Thr36, Asp37–Lys69, Asp70–Val102, Asn103–Lys135, Asp136–Gln168, Asp169–Glu201, and Asn202–Gly226. The tract at residues Asp39–Gly226 is interaction with RELA. The interaction with RB1 stretch occupies residues Glu171–Gly226.

In terms of assembly, part of transient complex containing PSMD10, PSMC4, PSMC5 and PAAF1 formed during the assembly of the 26S proteasome. Stays associated throughout the assembly of the PA700/19S RC and is released upon association with the 20S core. Interacts with PSMC4. Interacts with RB1. Interacts with CDK4. Interacts with MDM2. Interacts with RELA. Associates with a CDK4:CCND2 serine/threonine kinase complex. Interacts with ARHGDIA and increases the interaction between ARHGDIA and RHOA, hence promotes ARHGDIA inactivation of RHOA and ROCK. In terms of tissue distribution, tends to be up-regulated in cancer cells with RAS mutations, including lung cancers and adenocarconimas (at protein level).

It localises to the cytoplasm. The protein localises to the nucleus. Functionally, acts as a chaperone during the assembly of the 26S proteasome, specifically of the PA700/19S regulatory complex (RC). In the initial step of the base subcomplex assembly is part of an intermediate PSMD10:PSMC4:PSMC5:PAAF1 module which probably assembles with a PSMD5:PSMC2:PSMC1:PSMD2 module. Independently of the proteasome, regulates EGF-induced AKT activation through inhibition of the RHOA/ROCK/PTEN pathway, leading to prolonged AKT activation. Plays an important role in RAS-induced tumorigenesis. Its function is as follows. Acts as an proto-oncoprotein by being involved in negative regulation of tumor suppressors RB1 and p53/TP53. Overexpression is leading to phosphorylation of RB1 and proteasomal degradation of RB1. Regulates CDK4-mediated phosphorylation of RB1 by competing with CDKN2A for binding with CDK4. Facilitates binding of MDM2 to p53/TP53 and the mono- and polyubiquitination of p53/TP53 by MDM2 suggesting a function in targeting the TP53:MDM2 complex to the 26S proteasome. Involved in p53-independent apoptosis. Involved in regulation of NF-kappa-B by retaining it in the cytoplasm. Binds to the NF-kappa-B component RELA and accelerates its XPO1/CRM1-mediated nuclear export. In Homo sapiens (Human), this protein is 26S proteasome non-ATPase regulatory subunit 10 (PSMD10).